A 208-amino-acid chain; its full sequence is High frequency lysogenization protein HflD homolog (208 aa).

The stretch at Leu91–Glu125 forms a coiled coil.

Belongs to the HflD family.

It localises to the cytoplasm. Its subcellular location is the cell inner membrane. In Serratia proteamaculans (strain 568), this protein is High frequency lysogenization protein HflD homolog.